The primary structure comprises 66 residues: Scarabaecin (66 aa).

The first 26 residues, 1-26 (MKTLTFYTLLLCAALYSNFFDCKAVA), serve as a signal peptide directing secretion. An intrachain disulfide couples Cys46 to Cys57.

It is found in the secreted. In terms of biological role, possesses antifungal activity against phytopathogenic fungi such as P.oryzae, R.solani and B.cinerea but not against phytopathogenic bacteria. Shows weak activity against the insect pathogenic fungus B.bassiana and against S.aureus. Binds chitin. The sequence is that of Scarabaecin from Oryctes rhinoceros (Coconut rhinoceros beetle).